A 360-amino-acid polypeptide reads, in one-letter code: Phospho-N-acetylmuramoyl-pentapeptide-transferase (360 aa).

The next 10 helical transmembrane spans lie at 19–39 (LTYL…LSIF), 73–93 (TMGG…WADL), 95–115 (SVYT…GWTD), 136–156 (YLSL…DTPI), 173–193 (GILF…AVNL), 199–219 (GLAI…AYLS), 233–253 (IAGA…GLGF), 263–283 (VFMG…VAVV), 288–308 (LAFA…MIQV), and 338–358 (VTIR…STLK).

Belongs to the glycosyltransferase 4 family. MraY subfamily. Mg(2+) serves as cofactor.

The protein resides in the cell inner membrane. The catalysed reaction is UDP-N-acetyl-alpha-D-muramoyl-L-alanyl-gamma-D-glutamyl-meso-2,6-diaminopimeloyl-D-alanyl-D-alanine + di-trans,octa-cis-undecaprenyl phosphate = di-trans,octa-cis-undecaprenyl diphospho-N-acetyl-alpha-D-muramoyl-L-alanyl-D-glutamyl-meso-2,6-diaminopimeloyl-D-alanyl-D-alanine + UMP. It participates in cell wall biogenesis; peptidoglycan biosynthesis. Catalyzes the initial step of the lipid cycle reactions in the biosynthesis of the cell wall peptidoglycan: transfers peptidoglycan precursor phospho-MurNAc-pentapeptide from UDP-MurNAc-pentapeptide onto the lipid carrier undecaprenyl phosphate, yielding undecaprenyl-pyrophosphoryl-MurNAc-pentapeptide, known as lipid I. The polypeptide is Phospho-N-acetylmuramoyl-pentapeptide-transferase (Dichelobacter nodosus (strain VCS1703A)).